A 354-amino-acid polypeptide reads, in one-letter code: Chaperone protein dnaJ 49 (354 aa).

The J domain maps to 99-163 (DYYAILGLEK…NSRRQFDQVG (65 aa)). Residues 237 to 257 (CLTIIQILPFFLLLLLAYLPF) traverse the membrane as a helical segment.

It belongs to the DnaJ family. C/III subfamily.

The protein resides in the membrane. Its function is as follows. Plays a continuous role in plant development probably in the structural organization of compartments. The sequence is that of Chaperone protein dnaJ 49 (ATJ49) from Arabidopsis thaliana (Mouse-ear cress).